A 40-amino-acid chain; its full sequence is Photosystem II reaction center protein X (40 aa).

A helical membrane pass occupies residues 10–30 (WSLVWGTVIVVIPVTVGLVFI).

Belongs to the PsbX family. Type 1 subfamily. As to quaternary structure, PSII is composed of 1 copy each of membrane proteins PsbA, PsbB, PsbC, PsbD, PsbE, PsbF, PsbH, PsbI, PsbJ, PsbK, PsbL, PsbM, PsbT, PsbX, PsbY, PsbZ, Psb30/Ycf12, peripheral proteins PsbO, CyanoQ (PsbQ), PsbU, PsbV and a large number of cofactors. It forms dimeric complexes.

The protein localises to the cellular thylakoid membrane. Involved in the binding and/or turnover of quinones at the Q(B) site of photosystem II (PSII). PSII is a light-driven water plastoquinone oxidoreductase, using light energy to abstract electrons from H(2)O, generating a proton gradient subsequently used for ATP formation. The polypeptide is Photosystem II reaction center protein X (Crocosphaera subtropica (strain ATCC 51142 / BH68) (Cyanothece sp. (strain ATCC 51142))).